Consider the following 231-residue polypeptide: Uracil-DNA glycosylase (231 aa).

The active-site Proton acceptor is the D74.

This sequence belongs to the uracil-DNA glycosylase (UDG) superfamily. UNG family.

The protein localises to the cytoplasm. The catalysed reaction is Hydrolyzes single-stranded DNA or mismatched double-stranded DNA and polynucleotides, releasing free uracil.. Its function is as follows. Excises uracil residues from the DNA which can arise as a result of misincorporation of dUMP residues by DNA polymerase or due to deamination of cytosine. This Campylobacter jejuni subsp. doylei (strain ATCC BAA-1458 / RM4099 / 269.97) protein is Uracil-DNA glycosylase.